The primary structure comprises 476 residues: Bifunctional protein HldE (476 aa).

The interval 1–319 is ribokinase; that stretch reads MKVSLPAFEK…RALSVNHGES (319 aa). 195-198 lines the ATP pocket; that stretch reads NMGE. Asp264 is a catalytic residue. The tract at residues 345 to 476 is cytidylyltransferase; the sequence is MTNGCFDILH…SIIENIMANQ (132 aa).

The protein in the N-terminal section; belongs to the carbohydrate kinase PfkB family. It in the C-terminal section; belongs to the cytidylyltransferase family. Homodimer.

The enzyme catalyses D-glycero-beta-D-manno-heptose 7-phosphate + ATP = D-glycero-beta-D-manno-heptose 1,7-bisphosphate + ADP + H(+). The catalysed reaction is D-glycero-beta-D-manno-heptose 1-phosphate + ATP + H(+) = ADP-D-glycero-beta-D-manno-heptose + diphosphate. It participates in nucleotide-sugar biosynthesis; ADP-L-glycero-beta-D-manno-heptose biosynthesis; ADP-L-glycero-beta-D-manno-heptose from D-glycero-beta-D-manno-heptose 7-phosphate: step 1/4. It functions in the pathway nucleotide-sugar biosynthesis; ADP-L-glycero-beta-D-manno-heptose biosynthesis; ADP-L-glycero-beta-D-manno-heptose from D-glycero-beta-D-manno-heptose 7-phosphate: step 3/4. Its function is as follows. Catalyzes the phosphorylation of D-glycero-D-manno-heptose 7-phosphate at the C-1 position to selectively form D-glycero-beta-D-manno-heptose-1,7-bisphosphate. Catalyzes the ADP transfer from ATP to D-glycero-beta-D-manno-heptose 1-phosphate, yielding ADP-D-glycero-beta-D-manno-heptose. This Shewanella sediminis (strain HAW-EB3) protein is Bifunctional protein HldE.